The following is a 161-amino-acid chain: Tropomyosin-2 (161 aa).

Residues 1 to 161 (MEKIKEKLNS…DEIANSLENL (161 aa)) are a coiled coil. Basic and acidic residues predominate over residues 32-43 (LEQSNTEKENEI). Residues 32–97 (LEQSNTEKEN…NQDLEQQLED (66 aa)) form a disordered region. Ser-55 carries the phosphoserine modification. A compositionally biased stretch (polar residues) spans 62–83 (SQLSDTKQLAEDSNNLRSNNEN). Residues Ser-116 and Ser-157 each carry the phosphoserine modification.

Homodimer.

It is found in the cytoplasm. Its subcellular location is the cytoskeleton. In terms of biological role, involved in cell morphogenesis. Binds to F-actin and stabilizes the actin filaments. The polypeptide is Tropomyosin-2 (TPM2) (Saccharomyces cerevisiae (strain ATCC 204508 / S288c) (Baker's yeast)).